A 302-amino-acid polypeptide reads, in one-letter code: Segregation and condensation protein A (302 aa).

Belongs to the ScpA family. As to quaternary structure, component of a cohesin-like complex composed of ScpA, ScpB and the Smc homodimer, in which ScpA and ScpB bind to the head domain of Smc. The presence of the three proteins is required for the association of the complex with DNA.

Its subcellular location is the cytoplasm. Its function is as follows. Participates in chromosomal partition during cell division. May act via the formation of a condensin-like complex containing Smc and ScpB that pull DNA away from mid-cell into both cell halves. This Xylella fastidiosa (strain 9a5c) protein is Segregation and condensation protein A.